The chain runs to 537 residues: Chaperonin GroEL 1 (537 aa).

Residues 29–32, 86–90, Gly413, 478–480, and Asp494 contribute to the ATP site; these read TLGP, DGTTT, and NAA.

This sequence belongs to the chaperonin (HSP60) family. As to quaternary structure, forms a cylinder of 14 subunits composed of two heptameric rings stacked back-to-back. Interacts with the co-chaperonin GroES.

It localises to the cytoplasm. It carries out the reaction ATP + H2O + a folded polypeptide = ADP + phosphate + an unfolded polypeptide.. In terms of biological role, together with its co-chaperonin GroES, plays an essential role in assisting protein folding. The GroEL-GroES system forms a nano-cage that allows encapsulation of the non-native substrate proteins and provides a physical environment optimized to promote and accelerate protein folding. This Corynebacterium efficiens (strain DSM 44549 / YS-314 / AJ 12310 / JCM 11189 / NBRC 100395) protein is Chaperonin GroEL 1.